Consider the following 256-residue polypeptide: Small ribosomal subunit protein eS1 (256 aa).

Alanine 2 is modified (N-acetylalanine; partial).

It belongs to the eukaryotic ribosomal protein eS1 family. Component of the small ribosomal subunit. Mature ribosomes consist of a small (40S) and a large (60S) subunit. The 40S subunit contains about 33 different proteins and 1 molecule of RNA (18S). The 60S subunit contains about 49 different proteins and 3 molecules of RNA (25S, 5.8S and 5S).

The protein resides in the cytoplasm. The sequence is that of Small ribosomal subunit protein eS1 from Candida tropicalis (strain ATCC MYA-3404 / T1) (Yeast).